A 112-amino-acid polypeptide reads, in one-letter code: Nitrogenase iron-iron protein delta chain (112 aa).

Hexamer of two alpha, two beta, and two delta chains. The cofactor is iron-sulfur cluster.

The catalysed reaction is N2 + 8 reduced [2Fe-2S]-[ferredoxin] + 16 ATP + 16 H2O = H2 + 8 oxidized [2Fe-2S]-[ferredoxin] + 2 NH4(+) + 16 ADP + 16 phosphate + 6 H(+). The key enzymatic reactions in nitrogen fixation are catalyzed by the nitrogenase complex, which has 2 components: the iron protein (component 2) and a component 1 which is either a molybdenum-iron protein, a vanadium-iron, or an iron-iron protein. The protein is Nitrogenase iron-iron protein delta chain (anfG) of Azomonas macrocytogenes (Azotobacter macrocytogenes).